A 208-amino-acid polypeptide reads, in one-letter code: Uracil phosphoribosyltransferase (208 aa).

Residues Arg-78, Arg-103, and 130–138 (DPMLATGGS) contribute to the 5-phospho-alpha-D-ribose 1-diphosphate site. Residues Ile-193 and 198-200 (GDA) contribute to the uracil site. Asp-199 lines the 5-phospho-alpha-D-ribose 1-diphosphate pocket.

The protein belongs to the UPRTase family. The cofactor is Mg(2+).

It carries out the reaction UMP + diphosphate = 5-phospho-alpha-D-ribose 1-diphosphate + uracil. The protein operates within pyrimidine metabolism; UMP biosynthesis via salvage pathway; UMP from uracil: step 1/1. Its activity is regulated as follows. Allosterically activated by GTP. In terms of biological role, catalyzes the conversion of uracil and 5-phospho-alpha-D-ribose 1-diphosphate (PRPP) to UMP and diphosphate. The polypeptide is Uracil phosphoribosyltransferase (Actinobacillus pleuropneumoniae serotype 5b (strain L20)).